We begin with the raw amino-acid sequence, 121 residues long: Large ribosomal subunit protein eL18 (121 aa).

It belongs to the eukaryotic ribosomal protein eL18 family.

This Methanothermobacter thermautotrophicus (strain ATCC 29096 / DSM 1053 / JCM 10044 / NBRC 100330 / Delta H) (Methanobacterium thermoautotrophicum) protein is Large ribosomal subunit protein eL18.